The following is a 251-amino-acid chain: V-set and transmembrane domain-containing protein 2B (251 aa).

The N-terminal stretch at Met1 to Ala25 is a signal peptide. Residues Thr26–Ala142 enclose the Ig-like V-type domain. Residues Thr26 to Pro226 lie on the Extracellular side of the membrane. Cys46 and Cys125 are disulfide-bonded. A disordered region spans residues Ala157–Ala213. Low complexity-rich tracts occupy residues Ser166–Arg177 and Ala195–Ala213. The helical transmembrane segment at Ile227–Leu247 threads the bilayer. At Leu248–His251 the chain is on the cytoplasmic side.

It localises to the membrane. In Xenopus tropicalis (Western clawed frog), this protein is V-set and transmembrane domain-containing protein 2B (vstm2b).